An 826-amino-acid polypeptide reads, in one-letter code: DNA mismatch repair protein MutS (826 aa).

Position 622–629 (Gly-622–Ser-629) interacts with ATP.

The protein belongs to the DNA mismatch repair MutS family.

In terms of biological role, this protein is involved in the repair of mismatches in DNA. It is possible that it carries out the mismatch recognition step. This protein has a weak ATPase activity. This is DNA mismatch repair protein MutS from Chlamydia abortus (strain DSM 27085 / S26/3) (Chlamydophila abortus).